Here is a 334-residue protein sequence, read N- to C-terminus: tRNA U34 carboxymethyltransferase (334 aa).

Residues Lys91, Trp105, Lys110, Gly130, 152–154 (DPT), 181–182 (IE), Met196, Tyr200, and Arg315 each bind carboxy-S-adenosyl-L-methionine.

This sequence belongs to the class I-like SAM-binding methyltransferase superfamily. CmoB family. As to quaternary structure, homotetramer.

It carries out the reaction carboxy-S-adenosyl-L-methionine + 5-hydroxyuridine(34) in tRNA = 5-carboxymethoxyuridine(34) in tRNA + S-adenosyl-L-homocysteine + H(+). Its function is as follows. Catalyzes carboxymethyl transfer from carboxy-S-adenosyl-L-methionine (Cx-SAM) to 5-hydroxyuridine (ho5U) to form 5-carboxymethoxyuridine (cmo5U) at position 34 in tRNAs. This is tRNA U34 carboxymethyltransferase from Klebsiella pneumoniae subsp. pneumoniae (strain ATCC 700721 / MGH 78578).